We begin with the raw amino-acid sequence, 320 residues long: Dual oxidase maturation factor 2 (320 aa).

The helical transmembrane segment at 22 to 42 threads the bilayer; sequence VPLLIVILVFLSLAASFLFIL. The Cytoplasmic portion of the chain corresponds to 43-51; that stretch reads PGIRGHSRW. A helical transmembrane segment spans residues 52 to 72; that stretch reads FWLVRVLLSLFIGAEIVAVHF. The Extracellular portion of the chain corresponds to 73–183; it reads SGDWFVGRVW…HLAGHYAAAT (111 aa). Asn84, Asn109, and Asn121 each carry an N-linked (GlcNAc...) asparagine glycan. Residues 184–204 traverse the membrane as a helical segment; sequence LWVAFCFWIIANALLSMPAPL. At 205 to 206 the chain is on the cytoplasmic side; sequence YG. The chain crosses the membrane as a helical span at residues 207 to 227; that stretch reads GLALLTTGAFTLFGVFAFASI. The Extracellular segment spans residues 228–249; that stretch reads SSVPLCHFRLGSAVLTPYYGAS. Residues 250–270 traverse the membrane as a helical segment; sequence FWLTLATGILSLLLGGAVVIL. The Cytoplasmic segment spans residues 271 to 320; sequence HYTRPSALRSFLDLSVKDCSNQAKGNSPLTLNNPQHEQLKSPDLNITTLL.

Belongs to the DUOXA family. In terms of assembly, heterodimer with DUXA2; disulfide-linked. Interacts with CSNK1G2. N-glycosylated.

Its subcellular location is the endoplasmic reticulum membrane. In terms of biological role, required for the maturation and the transport from the endoplasmic reticulum to the plasma membrane of functional DUOX2. May play a role in thyroid hormone synthesis. This chain is Dual oxidase maturation factor 2 (Duoxa2), found in Mus musculus (Mouse).